We begin with the raw amino-acid sequence, 835 residues long: Phenylalanine--tRNA ligase beta subunit (835 aa).

Positions 44–160 (PETTGPLVFG…SYGEPGEDAR (117 aa)) constitute a tRNA-binding domain. The B5 domain maps to 419 to 494 (PAMQPITMKV…RLEGLEAIPT (76 aa)). Mg(2+)-binding residues include Asp-472, Asp-478, Glu-481, and Glu-482. In terms of domain architecture, FDX-ACB spans 741–834 (SSFPALHQDI…AKEKFNAEMR (94 aa)).

Belongs to the phenylalanyl-tRNA synthetase beta subunit family. Type 1 subfamily. Tetramer of two alpha and two beta subunits. Mg(2+) serves as cofactor.

It is found in the cytoplasm. It catalyses the reaction tRNA(Phe) + L-phenylalanine + ATP = L-phenylalanyl-tRNA(Phe) + AMP + diphosphate + H(+). In Corynebacterium glutamicum (strain ATCC 13032 / DSM 20300 / JCM 1318 / BCRC 11384 / CCUG 27702 / LMG 3730 / NBRC 12168 / NCIMB 10025 / NRRL B-2784 / 534), this protein is Phenylalanine--tRNA ligase beta subunit.